We begin with the raw amino-acid sequence, 151 residues long: Ribosomal RNA large subunit methyltransferase H (151 aa).

S-adenosyl-L-methionine-binding positions include Leu73, Gly100, and 119-124; that span reads LTKLTL.

It belongs to the RNA methyltransferase RlmH family. As to quaternary structure, homodimer.

It localises to the cytoplasm. It carries out the reaction pseudouridine(1915) in 23S rRNA + S-adenosyl-L-methionine = N(3)-methylpseudouridine(1915) in 23S rRNA + S-adenosyl-L-homocysteine + H(+). Functionally, specifically methylates the pseudouridine at position 1915 (m3Psi1915) in 23S rRNA. In Campylobacter hominis (strain ATCC BAA-381 / DSM 21671 / CCUG 45161 / LMG 19568 / NCTC 13146 / CH001A), this protein is Ribosomal RNA large subunit methyltransferase H.